We begin with the raw amino-acid sequence, 43 residues long: Probable intron-encoded DNA endonuclease 2 (43 aa).

This sequence belongs to the LAGLIDADG endonuclease family.

It localises to the mitochondrion. In terms of biological role, mitochondrial DNA endonuclease involved in intron homing. In Mycosarcoma maydis (Corn smut fungus), this protein is Probable intron-encoded DNA endonuclease 2 (hegI2).